A 298-amino-acid polypeptide reads, in one-letter code: N-acetylmuramic acid 6-phosphate etherase (298 aa).

The 164-residue stretch at isoleucine 55 to lysine 218 folds into the SIS domain. The Proton donor role is filled by glutamate 83. Glutamate 114 is an active-site residue.

The protein belongs to the GCKR-like family. MurNAc-6-P etherase subfamily. Homodimer.

The enzyme catalyses N-acetyl-D-muramate 6-phosphate + H2O = N-acetyl-D-glucosamine 6-phosphate + (R)-lactate. The protein operates within amino-sugar metabolism; N-acetylmuramate degradation. Its pathway is amino-sugar metabolism; 1,6-anhydro-N-acetylmuramate degradation. It participates in cell wall biogenesis; peptidoglycan recycling. In terms of biological role, specifically catalyzes the cleavage of the D-lactyl ether substituent of MurNAc 6-phosphate, producing GlcNAc 6-phosphate and D-lactate. Together with AnmK, is also required for the utilization of anhydro-N-acetylmuramic acid (anhMurNAc) either imported from the medium or derived from its own cell wall murein, and thus plays a role in cell wall recycling. The protein is N-acetylmuramic acid 6-phosphate etherase of Escherichia coli (strain K12 / MC4100 / BW2952).